A 144-amino-acid chain; its full sequence is Transmembrane protein 170A (144 aa).

The Extracellular segment spans residues 1–50; the sequence is MEREGSGGGGGSAGLLQQILSLKLVPRVGNGTLCPNSTSLCSFPEMWYGV. 2 N-linked (GlcNAc...) asparagine glycosylation sites follow: asparagine 30 and asparagine 36. The helical transmembrane segment at 51–71 threads the bilayer; it reads FLWALMSSVFFHVPAGLLALF. Residues 72–85 are Cytoplasmic-facing; the sequence is TLRHHKYGRFMSVS. A helical membrane pass occupies residues 86-106; that stretch reads ILLMGIVGPITAGILTSAAIA. At 107-116 the chain is on the extracellular side; sequence GVYRAAGKEM. A helical transmembrane segment spans residues 117–137; sequence IPFEALTLGTGQTFCVVVVSF. Topologically, residues 138-144 are cytoplasmic; sequence LRVLATL.

Belongs to the TMEM170 family. As to quaternary structure, interacts with RTN4.

Its subcellular location is the endoplasmic reticulum membrane. The protein resides in the nucleus envelope. Its function is as follows. Acts as a regulator of endoplasmic reticulum (ER) and nuclear envelope (NE) morphogenesis. Affects the ratio between tubular ER and ER sheets by promoting sheet formation at the expense of tubules. Influences NE expansion, nuclear pore complex formation and proper localization of inner nuclear membrane proteins. The polypeptide is Transmembrane protein 170A (Tmem170a) (Mus musculus (Mouse)).